Here is a 319-residue protein sequence, read N- to C-terminus: tRNA-cytidine(32) 2-sulfurtransferase (319 aa).

Residues 43–48 (SGGKDS) carry the PP-loop motif motif. Residues cysteine 118, cysteine 121, and cysteine 209 each contribute to the [4Fe-4S] cluster site.

This sequence belongs to the TtcA family. In terms of assembly, homodimer. Requires Mg(2+) as cofactor. The cofactor is [4Fe-4S] cluster.

The protein localises to the cytoplasm. It carries out the reaction cytidine(32) in tRNA + S-sulfanyl-L-cysteinyl-[cysteine desulfurase] + AH2 + ATP = 2-thiocytidine(32) in tRNA + L-cysteinyl-[cysteine desulfurase] + A + AMP + diphosphate + H(+). It participates in tRNA modification. Functionally, catalyzes the ATP-dependent 2-thiolation of cytidine in position 32 of tRNA, to form 2-thiocytidine (s(2)C32). The sulfur atoms are provided by the cysteine/cysteine desulfurase (IscS) system. The chain is tRNA-cytidine(32) 2-sulfurtransferase from Neisseria meningitidis serogroup C (strain 053442).